A 172-amino-acid polypeptide reads, in one-letter code: 3-hydroxydecanoyl-[acyl-carrier-protein] dehydratase (172 aa).

Residue H71 is part of the active site.

This sequence belongs to the thioester dehydratase family. FabA subfamily. In terms of assembly, homodimer.

It localises to the cytoplasm. It catalyses the reaction a (3R)-hydroxyacyl-[ACP] = a (2E)-enoyl-[ACP] + H2O. It carries out the reaction (3R)-hydroxydecanoyl-[ACP] = (2E)-decenoyl-[ACP] + H2O. The catalysed reaction is (2E)-decenoyl-[ACP] = (3Z)-decenoyl-[ACP]. Its pathway is lipid metabolism; fatty acid biosynthesis. In terms of biological role, necessary for the introduction of cis unsaturation into fatty acids. Catalyzes the dehydration of (3R)-3-hydroxydecanoyl-ACP to E-(2)-decenoyl-ACP and then its isomerization to Z-(3)-decenoyl-ACP. Can catalyze the dehydratase reaction for beta-hydroxyacyl-ACPs with saturated chain lengths up to 16:0, being most active on intermediate chain length. In Blochmanniella pennsylvanica (strain BPEN), this protein is 3-hydroxydecanoyl-[acyl-carrier-protein] dehydratase.